Reading from the N-terminus, the 338-residue chain is Lipoate-protein ligase A (338 aa).

Residues 29–216 (PATQRVLFLW…AFFAHYGERV (188 aa)) form the BPL/LPL catalytic domain. Residues Arg-71, 76–79 (GAVF), and Lys-134 contribute to the ATP site. Position 134 (Lys-134) interacts with (R)-lipoate.

The protein belongs to the LplA family. In terms of assembly, monomer.

The protein localises to the cytoplasm. It carries out the reaction L-lysyl-[lipoyl-carrier protein] + (R)-lipoate + ATP = N(6)-[(R)-lipoyl]-L-lysyl-[lipoyl-carrier protein] + AMP + diphosphate + H(+). The protein operates within protein modification; protein lipoylation via exogenous pathway; protein N(6)-(lipoyl)lysine from lipoate: step 1/2. It participates in protein modification; protein lipoylation via exogenous pathway; protein N(6)-(lipoyl)lysine from lipoate: step 2/2. Catalyzes both the ATP-dependent activation of exogenously supplied lipoate to lipoyl-AMP and the transfer of the activated lipoyl onto the lipoyl domains of lipoate-dependent enzymes. The sequence is that of Lipoate-protein ligase A from Salmonella schwarzengrund (strain CVM19633).